A 1592-amino-acid chain; its full sequence is Probable serine/threonine-protein kinase DDB_G0293958 (1592 aa).

Positions 1–302 (MTGFEIFKKK…CLNYLKEKLI (302 aa)) constitute a Protein kinase 1 domain. ATP-binding positions include 2–10 (TGFEIFKKK) and Lys-43. The active-site Proton acceptor is Asp-158. 3 disordered regions span residues 348–402 (INNN…NNNN), 455–526 (FNDI…SNYN), and 837–867 (KNNN…NDKS). Positions 349 to 402 (NNNNNNNNNNNNNNNNNNNNNNNNNNNNNNNNNNNNNNNNNNNNNNNNNNNNNN) are enriched in low complexity. A coiled-coil region spans residues 461–518 (STTGEEEEEEKKDNLKRQNENNQIEQEDKGEKHLKETLNNNNNNNNNNNNNNNNNNNN). Positions 486–496 (QEDKGEKHLKE) are enriched in basic and acidic residues. Composition is skewed to low complexity over residues 499 to 526 (NNNN…SNYN) and 837 to 864 (KNNN…NNSN). The Protein kinase 2 domain maps to 1342–1592 (LGTYNLIGDS…KELIECLNKL (251 aa)). Residues 1348–1356 (IGDSVFRNI) and Lys-1376 contribute to the ATP site. Residue Asp-1474 is the Proton acceptor of the active site.

Belongs to the protein kinase superfamily. Ser/Thr protein kinase family.

It catalyses the reaction L-seryl-[protein] + ATP = O-phospho-L-seryl-[protein] + ADP + H(+). The enzyme catalyses L-threonyl-[protein] + ATP = O-phospho-L-threonyl-[protein] + ADP + H(+). The polypeptide is Probable serine/threonine-protein kinase DDB_G0293958 (Dictyostelium discoideum (Social amoeba)).